The sequence spans 407 residues: Shaggy-related protein kinase iota (407 aa).

Low complexity predominate over residues 1 to 19 (MASLPLGPQPHALAPPLQL). The tract at residues 1 to 23 (MASLPLGPQPHALAPPLQLHDGD) is disordered. The residue at position 2 (A2) is an N-acetylalanine. In terms of domain architecture, Protein kinase spans 70-354 (YMAERVVGTG…ALEACAHPFF (285 aa)). ATP-binding positions include 76 to 84 (VGTGSFGIV) and K99. The active-site Proton acceptor is D195. Phosphotyrosine is present on Y230.

Belongs to the protein kinase superfamily. CMGC Ser/Thr protein kinase family. GSK-3 subfamily. In terms of assembly, binds to KIB1. Interacts with BSK6. In terms of processing, autophosphorylated mainly on threonine and serine residues.

The catalysed reaction is L-seryl-[protein] + ATP = O-phospho-L-seryl-[protein] + ADP + H(+). The enzyme catalyses L-threonyl-[protein] + ATP = O-phospho-L-threonyl-[protein] + ADP + H(+). Phosphorylates BSK1, BSK3, BSK5, BSK6, BSK8 and BSK11 in vitro. May mediate extracellular signals to regulate transcription in differentiating cells. The sequence is that of Shaggy-related protein kinase iota (ASK9) from Arabidopsis thaliana (Mouse-ear cress).